The chain runs to 90 residues: Acylphosphatase (90 aa).

Residues 5 to 90 (SYLFNVKGKV…WQELTDFKMY (86 aa)) form the Acylphosphatase-like domain. Residues arginine 20 and asparagine 38 contribute to the active site.

It belongs to the acylphosphatase family.

It catalyses the reaction an acyl phosphate + H2O = a carboxylate + phosphate + H(+). The chain is Acylphosphatase (acyP) from Aliivibrio fischeri (strain ATCC 700601 / ES114) (Vibrio fischeri).